The primary structure comprises 427 residues: UPF0229 protein YeaH (427 aa).

The span at 79–90 shows a compositional bias: basic and acidic residues; it reads NDHFVQNDRIER. The tract at residues 79-110 is disordered; that stretch reads NDHFVQNDRIERPQGGGGGSGSGQGQASQDGE. The span at 92–102 shows a compositional bias: gly residues; that stretch reads QGGGGGSGSGQ.

It belongs to the UPF0229 family.

The sequence is that of UPF0229 protein YeaH from Escherichia coli O127:H6 (strain E2348/69 / EPEC).